Consider the following 115-residue polypeptide: Protein V2 (115 aa).

This sequence belongs to the geminiviridae protein AV2/V2 family. In terms of assembly, interacts with host SGS3.

It localises to the host cytoplasm. It is found in the host perinuclear region. Through its interaction with host SGS3, acts as a suppressor of RNA-mediated gene silencing, also known as post-transcriptional gene silencing (PTGS), a mechanism of plant viral defense that limits the accumulation of viral RNAs. The polypeptide is Protein V2 (Tomato yellow leaf curl Sardinia virus (isolate Spain-2) (TYLCSV)).